We begin with the raw amino-acid sequence, 355 residues long: Cyclic nucleotide-gated potassium channel RHE_CH03180 (355 aa).

The Cytoplasmic portion of the chain corresponds to M1–P12. A helical membrane pass occupies residues L13–T30. Over Q31 to R38 the chain is Periplasmic. The helical transmembrane segment at L39–L61 threads the bilayer. The Cytoplasmic portion of the chain corresponds to S62–A73. A helical membrane pass occupies residues L74–S93. A helical transmembrane segment spans residues R94 to S111. At T112–L128 the chain is on the cytoplasmic side. A helical transmembrane segment spans residues L129–I149. At E150–S160 the chain is on the periplasmic side. The pore-forming intramembrane region spans I161 to D179. The Selectivity filter signature appears at T174–D179. The Periplasmic portion of the chain corresponds to E180–S184. Residues L185–L209 traverse the membrane as a helical segment. Topologically, residues A210–E355 are cytoplasmic. Residues G297 to E298, R307 to S308, and R348 contribute to the 3',5'-cyclic AMP site.

The protein belongs to the potassium channel family. As to quaternary structure, homotetramer.

It is found in the cell membrane. In terms of biological role, cyclic nucleotide-regulated potassium channel activated by cAMP. In Rhizobium etli (strain ATCC 51251 / DSM 11541 / JCM 21823 / NBRC 15573 / CFN 42), this protein is Cyclic nucleotide-gated potassium channel RHE_CH03180.